We begin with the raw amino-acid sequence, 92 residues long: Small ribosomal subunit protein uS19c (92 aa).

The protein belongs to the universal ribosomal protein uS19 family.

It is found in the plastid. The protein resides in the chloroplast. Protein S19 forms a complex with S13 that binds strongly to the 16S ribosomal RNA. The chain is Small ribosomal subunit protein uS19c from Coffea arabica (Arabian coffee).